The sequence spans 119 residues: Ribonuclease P protein component (119 aa).

Belongs to the RnpA family. In terms of assembly, consists of a catalytic RNA component (M1 or rnpB) and a protein subunit.

It carries out the reaction Endonucleolytic cleavage of RNA, removing 5'-extranucleotides from tRNA precursor.. In terms of biological role, RNaseP catalyzes the removal of the 5'-leader sequence from pre-tRNA to produce the mature 5'-terminus. It can also cleave other RNA substrates such as 4.5S RNA. The protein component plays an auxiliary but essential role in vivo by binding to the 5'-leader sequence and broadening the substrate specificity of the ribozyme. In Clostridium acetobutylicum (strain ATCC 824 / DSM 792 / JCM 1419 / IAM 19013 / LMG 5710 / NBRC 13948 / NRRL B-527 / VKM B-1787 / 2291 / W), this protein is Ribonuclease P protein component.